Reading from the N-terminus, the 137-residue chain is Ribonuclease P protein component (137 aa).

Belongs to the RnpA family. As to quaternary structure, consists of a catalytic RNA component (M1 or rnpB) and a protein subunit.

It catalyses the reaction Endonucleolytic cleavage of RNA, removing 5'-extranucleotides from tRNA precursor.. Its function is as follows. RNaseP catalyzes the removal of the 5'-leader sequence from pre-tRNA to produce the mature 5'-terminus. It can also cleave other RNA substrates such as 4.5S RNA. The protein component plays an auxiliary but essential role in vivo by binding to the 5'-leader sequence and broadening the substrate specificity of the ribozyme. This is Ribonuclease P protein component from Porphyromonas gingivalis (strain ATCC 33277 / DSM 20709 / CIP 103683 / JCM 12257 / NCTC 11834 / 2561).